A 707-amino-acid polypeptide reads, in one-letter code: Ribosomal RNA large subunit methyltransferase K/L (707 aa).

One can recognise a THUMP domain in the interval 44–155; the sequence is VIYNLCLWSR…NDILTVSFDL (112 aa).

This sequence belongs to the methyltransferase superfamily. RlmKL family.

It localises to the cytoplasm. It carries out the reaction guanosine(2445) in 23S rRNA + S-adenosyl-L-methionine = N(2)-methylguanosine(2445) in 23S rRNA + S-adenosyl-L-homocysteine + H(+). The enzyme catalyses guanosine(2069) in 23S rRNA + S-adenosyl-L-methionine = N(2)-methylguanosine(2069) in 23S rRNA + S-adenosyl-L-homocysteine + H(+). In terms of biological role, specifically methylates the guanine in position 2445 (m2G2445) and the guanine in position 2069 (m7G2069) of 23S rRNA. The sequence is that of Ribosomal RNA large subunit methyltransferase K/L from Legionella pneumophila subsp. pneumophila (strain Philadelphia 1 / ATCC 33152 / DSM 7513).